Consider the following 206-residue polypeptide: uncharacterized protein (206 aa).

The protein resides in the plastid. It localises to the cyanelle. This is an uncharacterized protein from Cyanophora paradoxa.